The following is a 289-amino-acid chain: Nucleotide-binding protein Francci3_1634 (289 aa).

13-20 (GLSGAGRS) is an ATP binding site. A GTP-binding site is contributed by 64 to 67 (DVRG).

It belongs to the RapZ-like family.

Displays ATPase and GTPase activities. The chain is Nucleotide-binding protein Francci3_1634 from Frankia casuarinae (strain DSM 45818 / CECT 9043 / HFP020203 / CcI3).